Consider the following 492-residue polypeptide: Cobyric acid synthase (492 aa).

A GATase cobBQ-type domain is found at 259–453 (HTTVAVVAYP…LHGLFEDAVA (195 aa)). Cys-340 serves as the catalytic Nucleophile. Residue His-445 is part of the active site.

It belongs to the CobB/CobQ family. CobQ subfamily.

It functions in the pathway cofactor biosynthesis; adenosylcobalamin biosynthesis. Its function is as follows. Catalyzes amidations at positions B, D, E, and G on adenosylcobyrinic A,C-diamide. NH(2) groups are provided by glutamine, and one molecule of ATP is hydrogenolyzed for each amidation. This is Cobyric acid synthase from Paracidovorax citrulli (strain AAC00-1) (Acidovorax citrulli).